Here is a 1017-residue protein sequence, read N- to C-terminus: Integrator complex subunit 3 (1017 aa).

Residues 952–1017 (EYEDSSKPPK…KGSAVGSDSD (66 aa)) are disordered. Acidic residues predominate over residues 983–997 (NEEESVSSSASEEED).

It belongs to the Integrator subunit 3 family. Component of the Integrator complex, composed of core subunits INTS1, INTS2, INTS3, INTS4, INTS5, INTS6, INTS7, INTS8, INTS9/RC74, INTS10, INTS11/CPSF3L, INTS12, INTS13, INTS14 and INTS15. The core complex associates with protein phosphatase 2A subunits PPP2CA and PPP2R1A, to form the Integrator-PP2A (INTAC) complex. Component of the SOSS complex.

The protein localises to the nucleus. Its subcellular location is the cytoplasm. Component of the integrator complex, a multiprotein complex that terminates RNA polymerase II (Pol II) transcription in the promoter-proximal region of genes. The integrator complex provides a quality checkpoint during transcription elongation by driving premature transcription termination of transcripts that are unfavorably configured for transcriptional elongation: the complex terminates transcription by (1) catalyzing dephosphorylation of the C-terminal domain (CTD) of Pol II subunit POLR2A/RPB1 and SUPT5H/SPT5, (2) degrading the exiting nascent RNA transcript via endonuclease activity and (3) promoting the release of Pol II from bound DNA. The integrator complex is also involved in terminating the synthesis of non-coding Pol II transcripts, such as enhancer RNAs (eRNAs), small nuclear RNAs (snRNAs), telomerase RNAs and long non-coding RNAs (lncRNAs). Within the integrator complex, INTS3 is involved in the post-termination step: INTS3 binds INTS7 in the open conformation of integrator complex and prevents the rebinding of Pol II to the integrator after termination cycle. Its function is as follows. Component of the SOSS complex, a multiprotein complex that functions downstream of the MRN complex to promote DNA repair and G2/M checkpoint. The SOSS complex associates with single-stranded DNA at DNA lesions and influences diverse endpoints in the cellular DNA damage response including cell-cycle checkpoint activation, recombinational repair and maintenance of genomic stability. The SOSS complex is required for efficient homologous recombination-dependent repair of double-strand breaks (DSBs) and ATM-dependent signaling pathways. In the SOSS complex, it is required for the assembly of the complex and for stabilization of the complex at DNA damage sites. In Danio rerio (Zebrafish), this protein is Integrator complex subunit 3 (ints3).